The sequence spans 1016 residues: FHIP family protein Bm1_18400 (1016 aa).

Disordered regions lie at residues 586 to 608 and 757 to 778; these read DSLR…RSSF and SDGF…PLGK.

It belongs to the FHIP family.

This is FHIP family protein Bm1_18400 from Brugia malayi (Filarial nematode worm).